Reading from the N-terminus, the 435-residue chain is ATP-dependent protease ATPase subunit HslU (435 aa).

Residues Val18, 60-65, Asp248, Glu313, and Arg385 each bind ATP; that span reads GCGKTE.

Belongs to the ClpX chaperone family. HslU subfamily. In terms of assembly, a double ring-shaped homohexamer of HslV is capped on each side by a ring-shaped HslU homohexamer. The assembly of the HslU/HslV complex is dependent on binding of ATP.

The protein resides in the cytoplasm. In terms of biological role, ATPase subunit of a proteasome-like degradation complex; this subunit has chaperone activity. The binding of ATP and its subsequent hydrolysis by HslU are essential for unfolding of protein substrates subsequently hydrolyzed by HslV. HslU recognizes the N-terminal part of its protein substrates and unfolds these before they are guided to HslV for hydrolysis. The polypeptide is ATP-dependent protease ATPase subunit HslU (Beijerinckia indica subsp. indica (strain ATCC 9039 / DSM 1715 / NCIMB 8712)).